A 277-amino-acid chain; its full sequence is Phosphoribosylaminoimidazole-succinocarboxamide synthase (277 aa).

The protein belongs to the SAICAR synthetase family.

It carries out the reaction 5-amino-1-(5-phospho-D-ribosyl)imidazole-4-carboxylate + L-aspartate + ATP = (2S)-2-[5-amino-1-(5-phospho-beta-D-ribosyl)imidazole-4-carboxamido]succinate + ADP + phosphate + 2 H(+). Its pathway is purine metabolism; IMP biosynthesis via de novo pathway; 5-amino-1-(5-phospho-D-ribosyl)imidazole-4-carboxamide from 5-amino-1-(5-phospho-D-ribosyl)imidazole-4-carboxylate: step 1/2. This chain is Phosphoribosylaminoimidazole-succinocarboxamide synthase, found in Salinispora tropica (strain ATCC BAA-916 / DSM 44818 / JCM 13857 / NBRC 105044 / CNB-440).